A 413-amino-acid polypeptide reads, in one-letter code: Tryptophan synthase beta chain (413 aa).

The residue at position 106 (lysine 106) is an N6-(pyridoxal phosphate)lysine.

It belongs to the TrpB family. In terms of assembly, tetramer of two alpha and two beta chains. It depends on pyridoxal 5'-phosphate as a cofactor.

The enzyme catalyses (1S,2R)-1-C-(indol-3-yl)glycerol 3-phosphate + L-serine = D-glyceraldehyde 3-phosphate + L-tryptophan + H2O. Its pathway is amino-acid biosynthesis; L-tryptophan biosynthesis; L-tryptophan from chorismate: step 5/5. Functionally, the beta subunit is responsible for the synthesis of L-tryptophan from indole and L-serine. The polypeptide is Tryptophan synthase beta chain (Methylobacterium radiotolerans (strain ATCC 27329 / DSM 1819 / JCM 2831 / NBRC 15690 / NCIMB 10815 / 0-1)).